Here is a 254-residue protein sequence, read N- to C-terminus: Leucyl/phenylalanyl-tRNA--protein transferase (254 aa).

This sequence belongs to the L/F-transferase family.

It localises to the cytoplasm. It catalyses the reaction N-terminal L-lysyl-[protein] + L-leucyl-tRNA(Leu) = N-terminal L-leucyl-L-lysyl-[protein] + tRNA(Leu) + H(+). It carries out the reaction N-terminal L-arginyl-[protein] + L-leucyl-tRNA(Leu) = N-terminal L-leucyl-L-arginyl-[protein] + tRNA(Leu) + H(+). The enzyme catalyses L-phenylalanyl-tRNA(Phe) + an N-terminal L-alpha-aminoacyl-[protein] = an N-terminal L-phenylalanyl-L-alpha-aminoacyl-[protein] + tRNA(Phe). Its function is as follows. Functions in the N-end rule pathway of protein degradation where it conjugates Leu, Phe and, less efficiently, Met from aminoacyl-tRNAs to the N-termini of proteins containing an N-terminal arginine or lysine. The sequence is that of Leucyl/phenylalanyl-tRNA--protein transferase from Burkholderia lata (strain ATCC 17760 / DSM 23089 / LMG 22485 / NCIMB 9086 / R18194 / 383).